Here is a 704-residue protein sequence, read N- to C-terminus: DNA ligase (704 aa).

Residues 43–47 (DADYD), 92–93 (SL), and Glu-124 contribute to the NAD(+) site. The active-site N6-AMP-lysine intermediate is Lys-126. The NAD(+) site is built by Arg-147, Glu-182, Lys-298, and Lys-322. 4 residues coordinate Zn(2+): Cys-427, Cys-430, Cys-445, and Cys-451. The 80-residue stretch at 625 to 704 (PVESPIAGKI…DAWLRLIGDA (80 aa)) folds into the BRCT domain.

This sequence belongs to the NAD-dependent DNA ligase family. LigA subfamily. It depends on Mg(2+) as a cofactor. The cofactor is Mn(2+).

It catalyses the reaction NAD(+) + (deoxyribonucleotide)n-3'-hydroxyl + 5'-phospho-(deoxyribonucleotide)m = (deoxyribonucleotide)n+m + AMP + beta-nicotinamide D-nucleotide.. DNA ligase that catalyzes the formation of phosphodiester linkages between 5'-phosphoryl and 3'-hydroxyl groups in double-stranded DNA using NAD as a coenzyme and as the energy source for the reaction. It is essential for DNA replication and repair of damaged DNA. The polypeptide is DNA ligase (Cereibacter sphaeroides (strain ATCC 17025 / ATH 2.4.3) (Rhodobacter sphaeroides)).